The sequence spans 235 residues: Motile sperm domain-containing protein 3 (235 aa).

2 disordered regions span residues 1–25 (MRRG…RGAP) and 143–171 (ELQG…FQEH). An MSP domain is found at 33-145 (PVLVFPPDLV…RAPAYPLELQ (113 aa)). Over residues 149–164 (DPAPRPGPPAGTPPPT) the composition is skewed to pro residues. 2 consecutive transmembrane segments (helical) span residues 180-200 (SFLL…LPLP) and 213-233 (VSLG…MVFL).

It localises to the membrane. In Homo sapiens (Human), this protein is Motile sperm domain-containing protein 3 (MOSPD3).